The following is a 430-amino-acid chain: Adenylosuccinate synthetase (430 aa).

GTP contacts are provided by residues 12–18 and 40–42; these read GDEGKGK and GHT. Residue aspartate 13 is the Proton acceptor of the active site. 2 residues coordinate Mg(2+): aspartate 13 and glycine 40. IMP contacts are provided by residues 13–16, 38–41, threonine 128, arginine 142, glutamine 223, threonine 238, and arginine 302; these read DEGK and NAGH. Catalysis depends on histidine 41, which acts as the Proton donor. A substrate-binding site is contributed by 298–304; the sequence is TTTGRPR. GTP is bound by residues arginine 304, 330 to 332, and 413 to 415; these read SID and SVG.

This sequence belongs to the adenylosuccinate synthetase family. Homodimer. Mg(2+) serves as cofactor.

It is found in the cytoplasm. It carries out the reaction IMP + L-aspartate + GTP = N(6)-(1,2-dicarboxyethyl)-AMP + GDP + phosphate + 2 H(+). The protein operates within purine metabolism; AMP biosynthesis via de novo pathway; AMP from IMP: step 1/2. In terms of biological role, plays an important role in the de novo pathway of purine nucleotide biosynthesis. Catalyzes the first committed step in the biosynthesis of AMP from IMP. The polypeptide is Adenylosuccinate synthetase (Lactococcus lactis subsp. cremoris (strain MG1363)).